Reading from the N-terminus, the 381-residue chain is Beta-1,4-galactosyltransferase 5 (381 aa).

The Cytoplasmic segment spans residues 1-11 (MPTHLRFRRRS). A helical; Signal-anchor for type II membrane protein transmembrane segment spans residues 12-32 (FLGLLFLFSLSTSALYFIYSA). Topologically, residues 33–381 (PGIVNEYLFM…SRDLAPVADY (349 aa)) are lumenal. Residues Asn-73, Asn-82, and Asn-120 are each glycosylated (N-linked (GlcNAc...) asparagine). Cys-106 and Cys-151 are oxidised to a cystine. Residues 162–166 (PFRNR), 201–203 (FNR), 228–229 (VD), Tyr-257, and Trp-289 each bind UDP-alpha-D-galactose. A disulfide bridge connects residues Cys-222 and Cys-241. Asp-229 serves as a coordination point for Mn(2+). N-acetyl-D-glucosamine is bound at residue 291-294 (GEDD). His-322 lines the Mn(2+) pocket. UDP-alpha-D-galactose is bound at residue 322 to 323 (HH). Arg-333 is a binding site for N-acetyl-D-glucosamine. An N-linked (GlcNAc...) asparagine glycan is attached at Asn-366.

It belongs to the glycosyltransferase 7 family. It depends on Mn(2+) as a cofactor.

The protein localises to the golgi apparatus. It localises to the golgi stack membrane. The enzyme catalyses a beta-D-glucosyl-(1&lt;-&gt;1')-N-acylsphing-4-enine + UDP-alpha-D-galactose = a beta-D-Gal-(1-&gt;4)-beta-D-Glc-(1&lt;-&gt;1)-Cer(d18:1(4E)) + UDP + H(+). The protein operates within protein modification; protein glycosylation. It functions in the pathway sphingolipid metabolism. Catalyzes the synthesis of lactosylceramide (LacCer) via the transfer of galactose from UDP-galactose to glucosylceramide (GlcCer). Required for proper patterning of the dorsoventral axis during embryogenesis through the regulation of BMP signaling. Plays a role in proteoglycan glycosylation that is required for BMP-dependent specification of the dorsoventral axis. The polypeptide is Beta-1,4-galactosyltransferase 5 (b4galt5) (Danio rerio (Zebrafish)).